A 390-amino-acid chain; its full sequence is Odorant receptor 85b (390 aa).

The Cytoplasmic portion of the chain corresponds to 1 to 30 (MEKLMKYASFFYTAVGIRPYTNGEESKMNK). Residues 31 to 51 (LIFHIVFWSNVINLSFVGLFE) form a helical membrane-spanning segment. The Extracellular portion of the chain corresponds to 52-66 (SIYVYSAFMDNKFLE). The chain crosses the membrane as a helical span at residues 67-87 (AVTALSYIGFVTVGMSKMFFI). Over 88–126 (RWKKTAITELINELKEIYPNGLIREERYNLPMYLGTCSR) the chain is Cytoplasmic. Residues 127 to 147 (ISLIYSLLYSVLIWTFNLFCV) form a helical membrane-spanning segment. Residues 148 to 200 (MEYWVYDKWLNIRVVGKQLPYLMYIPWKWQDNWSYYPLLFSQNFAGYTSAAGQ) are Extracellular-facing. N-linked (GlcNAc...) asparagine glycosylation occurs at N179. The helical transmembrane segment at 201 to 221 (ISTDVLLCAVATQLVMHFDFL) threads the bilayer. Residues 222–260 (SNSMERHELSGDWKKDSRFLVDIVRYHERILRLSDAVND) lie on the Cytoplasmic side of the membrane. Residues 261-281 (IFGIPLLLNFMVSSFVICFVG) form a helical membrane-spanning segment. Residues 282 to 291 (FQMTVGVPPD) lie on the Extracellular side of the membrane. Residues 292 to 312 (IVVKLFLFLVSSMSQVYLICH) form a helical membrane-spanning segment. Residues 313–360 (YGQLVADASYGFSVATYNQKWYKADVRYKRALVIIIARSQKVTFLKAT) lie on the Cytoplasmic side of the membrane. The chain crosses the membrane as a helical span at residues 361–381 (IFLDITRSTMTDLLQISYKFF). The Extracellular segment spans residues 382-390 (ALLRTMYTQ).

It belongs to the insect chemoreceptor superfamily. Heteromeric odorant receptor channel (TC 1.A.69) family. Or49a subfamily. As to quaternary structure, interacts with Orco. Complexes exist early in the endomembrane system in olfactory sensory neurons (OSNs), coupling these complexes to the conserved ciliary trafficking pathway. In terms of tissue distribution, expressed in olfactory sensory neurons in the antenna.

Its subcellular location is the cell membrane. Odorant receptor which mediates acceptance or avoidance behavior, depending on its substrates. The odorant receptor repertoire encodes a large collection of odor stimuli that vary widely in identity, intensity, and duration. Forms a complex with Orco to form odorant-sensing units, providing sensitive and prolonged odorant signaling and calcium permeability. Involved in the behavioral responses to 2-heptanone, amyl acetate, and butyl acetate. The sequence is that of Odorant receptor 85b (Or85b) from Drosophila melanogaster (Fruit fly).